Reading from the N-terminus, the 337-residue chain is Anthranilate phosphoribosyltransferase (337 aa).

5-phospho-alpha-D-ribose 1-diphosphate contacts are provided by residues glycine 82, glycine 85–aspartate 86, threonine 90, asparagine 92–threonine 95, lysine 110–serine 118, and serine 122. Glycine 82 is an anthranilate binding site. Serine 94 provides a ligand contact to Mg(2+). Arginine 168 is a binding site for anthranilate. Aspartate 226 and glutamate 227 together coordinate Mg(2+).

The protein belongs to the anthranilate phosphoribosyltransferase family. Homodimer. Requires Mg(2+) as cofactor.

It carries out the reaction N-(5-phospho-beta-D-ribosyl)anthranilate + diphosphate = 5-phospho-alpha-D-ribose 1-diphosphate + anthranilate. The protein operates within amino-acid biosynthesis; L-tryptophan biosynthesis; L-tryptophan from chorismate: step 2/5. Functionally, catalyzes the transfer of the phosphoribosyl group of 5-phosphorylribose-1-pyrophosphate (PRPP) to anthranilate to yield N-(5'-phosphoribosyl)-anthranilate (PRA). This chain is Anthranilate phosphoribosyltransferase, found in Francisella tularensis subsp. holarctica (strain OSU18).